The primary structure comprises 274 residues: MNKTAIALLALLASSVSLAATPWQKITQPVPGSAQSIGSFSNGCIVGADTLPIQSEHYQVMRTDQRRYFGHPDLVMFIQRLSSQVSNLGMGTVLIGDMGMPAGGRFNGGHASHQTGLDVDIFLQLPKTRWTSAQLLRPQALDLVSRDGKHVVSTLWKPEIFSLIKLAAQDKDVTRIFVNPAIKQQLCLDAGTDRDWLRKVRPWFQHRAHMHVRLRCPADSLECEDQPLPPPGDGCGAELQSWFEPPKPGTTKPEKKTPPPLPPSCQALLDEHVI.

Residues 1–19 (MNKTAIALLALLASSVSLA) form the signal peptide. Disulfide bonds link Cys-44/Cys-265, Cys-187/Cys-235, and Cys-216/Cys-223. Zn(2+)-binding residues include His-110, His-113, Asp-120, Asp-147, His-150, and His-211. The interval 227–274 (PLPPPGDGCGAELQSWFEPPKPGTTKPEKKTPPPLPPSCQALLDEHVI) is disordered.

It belongs to the peptidase M74 family. As to quaternary structure, dimer. Zn(2+) is required as a cofactor.

It localises to the periplasm. In terms of biological role, murein endopeptidase that cleaves the D-alanyl-meso-2,6-diamino-pimelyl amide bond that connects peptidoglycan strands. Likely plays a role in the removal of murein from the sacculus. The polypeptide is Penicillin-insensitive murein endopeptidase (Shigella dysenteriae serotype 1 (strain Sd197)).